Consider the following 334-residue polypeptide: Methionyl-tRNA formyltransferase (334 aa).

Residue 111–114 (SLLP) coordinates (6S)-5,6,7,8-tetrahydrofolate.

This sequence belongs to the Fmt family.

The catalysed reaction is L-methionyl-tRNA(fMet) + (6R)-10-formyltetrahydrofolate = N-formyl-L-methionyl-tRNA(fMet) + (6S)-5,6,7,8-tetrahydrofolate + H(+). Attaches a formyl group to the free amino group of methionyl-tRNA(fMet). The formyl group appears to play a dual role in the initiator identity of N-formylmethionyl-tRNA by promoting its recognition by IF2 and preventing the misappropriation of this tRNA by the elongation apparatus. The sequence is that of Methionyl-tRNA formyltransferase from Cyanothece sp. (strain PCC 7425 / ATCC 29141).